Consider the following 646-residue polypeptide: DEAD-box ATP-dependent RNA helicase 52 (646 aa).

Disordered stretches follow at residues 1–64 and 76–117; these read MSSN…ANSG and GSGY…PAVN. Ser2 is subject to N-acetylserine. Gly residues-rich tracts occupy residues 54 to 64 and 76 to 87; these read DRGGYGGANSG and GSGYGGRGGPVG. Residues 146–174 carry the Q motif motif; the sequence is NTFAEIDLGEALNLNIQRCKYVKPTPVQR. One can recognise a Helicase ATP-binding domain in the interval 177-361; it reads IPILAAGRDL…SDFLSNYIFL (185 aa). ATP is bound at residue 190-197; it reads AQTGSGKT. The short motif at 305–308 is the DEAD box element; sequence DEAD. The region spanning 388-539 is the Helicase C-terminal domain; sequence HLMDLLHAQR…EVPDWLTRYA (152 aa).

Belongs to the DEAD box helicase family. DDX3/DED1 subfamily.

It carries out the reaction ATP + H2O = ADP + phosphate + H(+). This Arabidopsis thaliana (Mouse-ear cress) protein is DEAD-box ATP-dependent RNA helicase 52 (RH52).